The sequence spans 494 residues: UDP-N-acetylmuramoyl-L-alanyl-D-glutamate--2,6-diaminopimelate ligase (494 aa).

S32 lines the UDP-N-acetyl-alpha-D-muramoyl-L-alanyl-D-glutamate pocket. 112–118 contributes to the ATP binding site; the sequence is GTNGKTT. UDP-N-acetyl-alpha-D-muramoyl-L-alanyl-D-glutamate contacts are provided by residues N153, 154-155, S181, and R189; that span reads TT. N6-carboxylysine is present on K221. Residues R383, 407-410, G459, and E463 contribute to the meso-2,6-diaminopimelate site; that span reads DNPR. The short motif at 407-410 is the Meso-diaminopimelate recognition motif element; the sequence is DNPR.

This sequence belongs to the MurCDEF family. MurE subfamily. Requires Mg(2+) as cofactor. Carboxylation is probably crucial for Mg(2+) binding and, consequently, for the gamma-phosphate positioning of ATP.

It is found in the cytoplasm. It catalyses the reaction UDP-N-acetyl-alpha-D-muramoyl-L-alanyl-D-glutamate + meso-2,6-diaminopimelate + ATP = UDP-N-acetyl-alpha-D-muramoyl-L-alanyl-gamma-D-glutamyl-meso-2,6-diaminopimelate + ADP + phosphate + H(+). It functions in the pathway cell wall biogenesis; peptidoglycan biosynthesis. In terms of biological role, catalyzes the addition of meso-diaminopimelic acid to the nucleotide precursor UDP-N-acetylmuramoyl-L-alanyl-D-glutamate (UMAG) in the biosynthesis of bacterial cell-wall peptidoglycan. This chain is UDP-N-acetylmuramoyl-L-alanyl-D-glutamate--2,6-diaminopimelate ligase, found in Solibacter usitatus (strain Ellin6076).